A 995-amino-acid polypeptide reads, in one-letter code: UPF0182 protein MMAR_1371 (995 aa).

7 consecutive transmembrane segments (helical) span residues 18 to 38 (VLILIALGVIALLLAGPRLID), 63 to 83 (FLVFLVAGVLVGGIVFAGLAL), 113 to 133 (LFGIGIPAAIGLLAGIVAQSY), 175 to 195 (FVAIFLAFVANVVSHYLFGGI), 210 to 230 (IQLVSLVGVLVLLKAVAYWLD), 259 to 279 (KLILMAIAVICAAAVFSAIVL), and 287 to 307 (IGLVLLLLSSLIVGAAWPMIV). A disordered region spans residues 900-948 (AATGIQPTEGGAPANVPPNNAPSPEALPGTPPSPPTAVPPAPEASVTLS). Positions 928–941 (GTPPSPPTAVPPAP) are enriched in pro residues.

It belongs to the UPF0182 family.

Its subcellular location is the cell membrane. This is UPF0182 protein MMAR_1371 from Mycobacterium marinum (strain ATCC BAA-535 / M).